We begin with the raw amino-acid sequence, 701 residues long: DNA ligase (701 aa).

NAD(+) is bound by residues 50-54 (DYEYD), 99-100 (SL), and E130. The active-site N6-AMP-lysine intermediate is K132. R153, E187, K301, and K325 together coordinate NAD(+). Positions 419, 422, 437, and 442 each coordinate Zn(2+). A BRCT domain is found at 626-701 (NEHQKYMNKT…EIITEPFWDN (76 aa)).

The protein belongs to the NAD-dependent DNA ligase family. LigA subfamily. It depends on Mg(2+) as a cofactor. Requires Mn(2+) as cofactor.

The catalysed reaction is NAD(+) + (deoxyribonucleotide)n-3'-hydroxyl + 5'-phospho-(deoxyribonucleotide)m = (deoxyribonucleotide)n+m + AMP + beta-nicotinamide D-nucleotide.. In terms of biological role, DNA ligase that catalyzes the formation of phosphodiester linkages between 5'-phosphoryl and 3'-hydroxyl groups in double-stranded DNA using NAD as a coenzyme and as the energy source for the reaction. It is essential for DNA replication and repair of damaged DNA. This Malacoplasma penetrans (strain HF-2) (Mycoplasma penetrans) protein is DNA ligase.